Consider the following 390-residue polypeptide: Nucleosome assembly protein 1-like 1 (390 aa).

The span at 1–10 (MADIDNKEQS) shows a compositional bias: basic and acidic residues. Residues 1 to 32 (MADIDNKEQSELDQDLEDVEEVEEEETGEETK) are disordered. At alanine 2 the chain carries N-acetylalanine. Serine 10 is subject to Phosphoserine. The span at 11–28 (ELDQDLEDVEEVEEEETG) shows a compositional bias: acidic residues. Phosphothreonine is present on residues threonine 62 and threonine 64. At serine 69 the chain carries Phosphoserine. Residue lysine 116 is modified to N6-acetyllysine. An NAP1L motif motif is present at residues 125–150 (YEPTEEECEWKPDEEDEVSEELKEKA). Over residues 131 to 143 (ECEWKPDEEDEVS) the composition is skewed to acidic residues. The tract at residues 131–163 (ECEWKPDEEDEVSEELKEKAKIEDEKKDEEKED) is disordered. The residue at position 143 (serine 143) is a Phosphoserine. The segment covering 144–163 (EELKEKAKIEDEKKDEEKED) has biased composition (basic and acidic residues). A Nuclear localization signal motif is present at residues 272–278 (IKKKQKH). Acidic residues predominate over residues 345 to 375 (AIEDDDDDYDEEGEEADEEGEEEGDEENDPD). A disordered region spans residues 345–390 (AIEDDDDDYDEEGEEADEEGEEEGDEENDPDYDPKKDQNPAECKQQ). Glutamate 358 and glutamate 359 each carry 5-glutamyl polyglycine. The span at 376-390 (YDPKKDQNPAECKQQ) shows a compositional bias: basic and acidic residues. Cysteine 387 bears the Cysteine methyl ester mark. Cysteine 387 carries S-farnesyl cysteine lipidation. Positions 388–390 (KQQ) are cleaved as a propeptide — removed in mature form.

Belongs to the nucleosome assembly protein (NAP) family. In terms of assembly, homodimer. The dimer binds strongly and sequentially to single and double H2A-H2B heterodimers. Interacts with ERCC6; this interaction increases ERCC6 processivity. Interacts with RAD54. Interacts with SETD1A. Post-translationally, polyglycylated by TTLL10 on glutamate residues, resulting in polyglycine chains on the gamma-carboxyl group. Both polyglutamylation and polyglycylation modifications can coexist on the same protein on adjacent residues, and lowering polyglycylation levels increases polyglutamylation, and reciprocally. In terms of processing, polyglutamylated by TTLL4 on glutamate residues, resulting in polyglutamate chains on the gamma-carboxyl group. Both polyglutamylation and polyglycylation modifications can coexist on the same protein on adjacent residues, and lowering polyglycylation levels increases polyglutamylation, and reciprocally.

Its subcellular location is the nucleus. The protein resides in the melanosome. It localises to the cytoplasm. Functionally, histone chaperone that plays a role in the nuclear import of H2A-H2B and nucleosome assembly. Also participates in several important DNA repair mechanisms: greatly enhances ERCC6-mediated chromatin remodeling which is essential for transcription-coupled nucleotide excision DNA repair. Also stimulates homologous recombination (HR) by RAD51 and RAD54 which is essential in mitotic DNA double strand break (DSB) repair. Plays a key role in the regulation of embryonic neurogenesis. Promotes the proliferation of neural progenitors and inhibits neuronal differentiation during cortical development. Regulates neurogenesis via the modulation of RASSF10; regulates RASSF10 expression by promoting SETD1A-mediated H3K4 methylation at the RASSF10 promoter. In Rattus norvegicus (Rat), this protein is Nucleosome assembly protein 1-like 1 (Nap1l1).